We begin with the raw amino-acid sequence, 154 residues long: 3-dehydroquinate dehydratase (154 aa).

The Proton acceptor role is filled by Tyr22. 3 residues coordinate substrate: Asn73, His79, and Asp86. Catalysis depends on His99, which acts as the Proton donor. Substrate contacts are provided by residues 100–101 and Arg110; that span reads LS.

Belongs to the type-II 3-dehydroquinase family. As to quaternary structure, homododecamer.

The enzyme catalyses 3-dehydroquinate = 3-dehydroshikimate + H2O. The protein operates within metabolic intermediate biosynthesis; chorismate biosynthesis; chorismate from D-erythrose 4-phosphate and phosphoenolpyruvate: step 3/7. Its function is as follows. Catalyzes a trans-dehydration via an enolate intermediate. The chain is 3-dehydroquinate dehydratase from Carboxydothermus hydrogenoformans (strain ATCC BAA-161 / DSM 6008 / Z-2901).